The primary structure comprises 346 residues: Inositol 2-dehydrogenase/D-chiro-inositol 3-dehydrogenase (346 aa).

The span at 322–331 (GREESIELPK) shows a compositional bias: basic and acidic residues. The disordered stretch occupies residues 322–346 (GREESIELPKKPAFYQHSAATPEQV).

It belongs to the Gfo/Idh/MocA family. As to quaternary structure, homotetramer.

The enzyme catalyses myo-inositol + NAD(+) = scyllo-inosose + NADH + H(+). The catalysed reaction is 1D-chiro-inositol + NAD(+) = scyllo-inosine + NADH + H(+). It participates in polyol metabolism; myo-inositol degradation into acetyl-CoA; acetyl-CoA from myo-inositol: step 1/7. Its function is as follows. Involved in the oxidation of myo-inositol (MI) and D-chiro-inositol (DCI) to 2-keto-myo-inositol (2KMI or 2-inosose) and 1-keto-D-chiro-inositol (1KDCI), respectively. This is Inositol 2-dehydrogenase/D-chiro-inositol 3-dehydrogenase from Shouchella clausii (strain KSM-K16) (Alkalihalobacillus clausii).